A 359-amino-acid polypeptide reads, in one-letter code: Doublesex- and mab-3-related transcription factor B1 (359 aa).

The segment at residues 7-54 (CSRCRNHGYLVPVKGHTGKCRWKQCICDKCYLITERQKIMAAQKVLRT) is a DNA-binding region (DM). 2 disordered regions span residues 111–149 (PPQA…RDRS) and 262–359 (SGLV…EQSN). Pro residues-rich tracts occupy residues 277-299 (CSPP…PQPQ) and 315-325 (LPPPPPPPSPP). The segment covering 348–359 (EPSQDSPQEQSN) has biased composition (polar residues).

This sequence belongs to the DMRT family. As to expression, brain.

Its subcellular location is the nucleus. The sequence is that of Doublesex- and mab-3-related transcription factor B1 (Dmrtb1) from Mus musculus (Mouse).